The primary structure comprises 245 residues: 1-(5-phosphoribosyl)-5-[(5-phosphoribosylamino)methylideneamino] imidazole-4-carboxamide isomerase (245 aa).

The active-site Proton acceptor is Asp-7. Asp-129 serves as the catalytic Proton donor.

It belongs to the HisA/HisF family.

Its subcellular location is the cytoplasm. It carries out the reaction 1-(5-phospho-beta-D-ribosyl)-5-[(5-phospho-beta-D-ribosylamino)methylideneamino]imidazole-4-carboxamide = 5-[(5-phospho-1-deoxy-D-ribulos-1-ylimino)methylamino]-1-(5-phospho-beta-D-ribosyl)imidazole-4-carboxamide. It functions in the pathway amino-acid biosynthesis; L-histidine biosynthesis; L-histidine from 5-phospho-alpha-D-ribose 1-diphosphate: step 4/9. The sequence is that of 1-(5-phosphoribosyl)-5-[(5-phosphoribosylamino)methylideneamino] imidazole-4-carboxamide isomerase from Aliivibrio fischeri (strain ATCC 700601 / ES114) (Vibrio fischeri).